Reading from the N-terminus, the 103-residue chain is Large ribosomal subunit protein uL24 (103 aa).

Belongs to the universal ribosomal protein uL24 family. In terms of assembly, part of the 50S ribosomal subunit.

Its function is as follows. One of two assembly initiator proteins, it binds directly to the 5'-end of the 23S rRNA, where it nucleates assembly of the 50S subunit. One of the proteins that surrounds the polypeptide exit tunnel on the outside of the subunit. The polypeptide is Large ribosomal subunit protein uL24 (Lachnospira eligens (strain ATCC 27750 / DSM 3376 / VPI C15-48 / C15-B4) (Eubacterium eligens)).